The following is a 190-amino-acid chain: Pyridoxal 5'-phosphate synthase subunit PdxT (190 aa).

46 to 48 (GES) contacts L-glutamine. The Nucleophile role is filled by Cys78. Residues Arg108 and 137–138 (IR) contribute to the L-glutamine site. Catalysis depends on charge relay system residues His174 and Glu176.

This sequence belongs to the glutaminase PdxT/SNO family. In terms of assembly, in the presence of PdxS, forms a dodecamer of heterodimers. Only shows activity in the heterodimer.

The catalysed reaction is aldehydo-D-ribose 5-phosphate + D-glyceraldehyde 3-phosphate + L-glutamine = pyridoxal 5'-phosphate + L-glutamate + phosphate + 3 H2O + H(+). It carries out the reaction L-glutamine + H2O = L-glutamate + NH4(+). It participates in cofactor biosynthesis; pyridoxal 5'-phosphate biosynthesis. Its function is as follows. Catalyzes the hydrolysis of glutamine to glutamate and ammonia as part of the biosynthesis of pyridoxal 5'-phosphate. The resulting ammonia molecule is channeled to the active site of PdxS. The sequence is that of Pyridoxal 5'-phosphate synthase subunit PdxT from Chloroflexus aurantiacus (strain ATCC 29366 / DSM 635 / J-10-fl).